A 177-amino-acid chain; its full sequence is Interleukin-7 (177 aa).

An N-terminal signal peptide occupies residues 1–25; it reads MFHVSFRYIFGLPPLILVLLPVASS. Cystine bridges form between Cys27–Cys166, Cys59–Cys154, and Cys72–Cys117. N-linked (GlcNAc...) asparagine glycans are attached at residues Asn95, Asn116, and Asn141.

This sequence belongs to the IL-7/IL-9 family. In terms of assembly, interacts with IL7R and CSF2RG.

The protein localises to the secreted. In terms of biological role, hematopoietic cytokine that plays an essential role in the development, expansion, and survival of naive and memory T-cells and B-cells thereby regulating the number of mature lymphocytes and maintaining lymphoid homeostasis. Mechanistically, exerts its biological effects through a receptor composed of IL7RA subunit and the cytokine receptor common subunit gamma/CSF2RG. Binding to the receptor leads to activation of various kinases including JAK1 or JAK3 depending on the cell type and subsequently propagation of signals through activation of several downstream signaling pathways including the PI3K/Akt/mTOR or the JAK-STAT5. This Homo sapiens (Human) protein is Interleukin-7 (IL7).